A 104-amino-acid polypeptide reads, in one-letter code: Large ribosomal subunit protein eL30 (104 aa).

It belongs to the eukaryotic ribosomal protein eL30 family.

The chain is Large ribosomal subunit protein eL30 (rpl30e) from Sulfolobus acidocaldarius (strain ATCC 33909 / DSM 639 / JCM 8929 / NBRC 15157 / NCIMB 11770).